Here is a 501-residue protein sequence, read N- to C-terminus: ATP synthase subunit alpha (501 aa).

169–176 is a binding site for ATP; the sequence is GDRQTGKT.

Belongs to the ATPase alpha/beta chains family. In terms of assembly, F-type ATPases have 2 components, CF(1) - the catalytic core - and CF(0) - the membrane proton channel. CF(1) has five subunits: alpha(3), beta(3), gamma(1), delta(1), epsilon(1). CF(0) has three main subunits: a(1), b(2) and c(9-12). The alpha and beta chains form an alternating ring which encloses part of the gamma chain. CF(1) is attached to CF(0) by a central stalk formed by the gamma and epsilon chains, while a peripheral stalk is formed by the delta and b chains.

It localises to the cell inner membrane. The enzyme catalyses ATP + H2O + 4 H(+)(in) = ADP + phosphate + 5 H(+)(out). In terms of biological role, produces ATP from ADP in the presence of a proton gradient across the membrane. The alpha chain is a regulatory subunit. This is ATP synthase subunit alpha from Campylobacter jejuni subsp. jejuni serotype O:6 (strain 81116 / NCTC 11828).